The primary structure comprises 261 residues: Cytochrome c oxidase subunit 3 (261 aa).

Over M1–P15 the chain is Mitochondrial matrix. Residues W16–W34 traverse the membrane as a helical segment. Residues F35–T40 are Mitochondrial intermembrane-facing. Residues A41–T66 traverse the membrane as a helical segment. The Mitochondrial matrix portion of the chain corresponds to F67–T72. Residues P73–S105 form a helical membrane-spanning segment. At L106–E128 the chain is on the mitochondrial intermembrane side. A helical transmembrane segment spans residues V129–M152. Residues E153–N155 are Mitochondrial matrix-facing. A helical membrane pass occupies residues R156–E183. Over A184 to D190 the chain is Mitochondrial intermembrane. The helical transmembrane segment at G191–L223 threads the bilayer. The Mitochondrial matrix segment spans residues K224–H232. A helical transmembrane segment spans residues F233–I256. The Mitochondrial intermembrane segment spans residues Y257–S261.

This sequence belongs to the cytochrome c oxidase subunit 3 family. As to quaternary structure, component of the cytochrome c oxidase (complex IV, CIV), a multisubunit enzyme composed of 14 subunits. The complex is composed of a catalytic core of 3 subunits MT-CO1, MT-CO2 and MT-CO3, encoded in the mitochondrial DNA, and 11 supernumerary subunits COX4I, COX5A, COX5B, COX6A, COX6B, COX6C, COX7A, COX7B, COX7C, COX8 and NDUFA4, which are encoded in the nuclear genome. The complex exists as a monomer or a dimer and forms supercomplexes (SCs) in the inner mitochondrial membrane with NADH-ubiquinone oxidoreductase (complex I, CI) and ubiquinol-cytochrome c oxidoreductase (cytochrome b-c1 complex, complex III, CIII), resulting in different assemblies (supercomplex SCI(1)III(2)IV(1) and megacomplex MCI(2)III(2)IV(2)).

The protein localises to the mitochondrion inner membrane. The catalysed reaction is 4 Fe(II)-[cytochrome c] + O2 + 8 H(+)(in) = 4 Fe(III)-[cytochrome c] + 2 H2O + 4 H(+)(out). Functionally, component of the cytochrome c oxidase, the last enzyme in the mitochondrial electron transport chain which drives oxidative phosphorylation. The respiratory chain contains 3 multisubunit complexes succinate dehydrogenase (complex II, CII), ubiquinol-cytochrome c oxidoreductase (cytochrome b-c1 complex, complex III, CIII) and cytochrome c oxidase (complex IV, CIV), that cooperate to transfer electrons derived from NADH and succinate to molecular oxygen, creating an electrochemical gradient over the inner membrane that drives transmembrane transport and the ATP synthase. Cytochrome c oxidase is the component of the respiratory chain that catalyzes the reduction of oxygen to water. Electrons originating from reduced cytochrome c in the intermembrane space (IMS) are transferred via the dinuclear copper A center (CU(A)) of subunit 2 and heme A of subunit 1 to the active site in subunit 1, a binuclear center (BNC) formed by heme A3 and copper B (CU(B)). The BNC reduces molecular oxygen to 2 water molecules using 4 electrons from cytochrome c in the IMS and 4 protons from the mitochondrial matrix. The chain is Cytochrome c oxidase subunit 3 (MT-CO3) from Syncerus caffer (African buffalo).